Reading from the N-terminus, the 64-residue chain is Sperm protamine P1 (64 aa).

The tract at residues 1–64 (MVRYRRHSRS…QSRRRRRRRY (64 aa)) is disordered.

Belongs to the protamine P1 family. Testis.

The protein resides in the nucleus. The protein localises to the chromosome. Functionally, protamines substitute for histones in the chromatin of sperm during the haploid phase of spermatogenesis. They compact sperm DNA into a highly condensed, stable and inactive complex. The polypeptide is Sperm protamine P1 (PRM1) (Dromiciops gliroides (Monito del Monte)).